Reading from the N-terminus, the 332-residue chain is Ferredoxin--NADP reductase (332 aa).

Positions 20, 39, 47, 52, 92, 126, 288, and 329 each coordinate FAD.

Belongs to the ferredoxin--NADP reductase type 2 family. In terms of assembly, homodimer. FAD serves as cofactor.

It catalyses the reaction 2 reduced [2Fe-2S]-[ferredoxin] + NADP(+) + H(+) = 2 oxidized [2Fe-2S]-[ferredoxin] + NADPH. In Geobacillus kaustophilus (strain HTA426), this protein is Ferredoxin--NADP reductase.